The following is a 428-amino-acid chain: Growth/differentiation factor 2 (428 aa).

The first 22 residues, Met1–Gln22, serve as a signal peptide directing secretion. Residues Lys23 to Arg318 constitute a propeptide that is removed on maturation. N-linked (GlcNAc...) asparagine glycosylation is found at Asn70 and Asn135. Cys155 and Cys236 are disulfide-bonded. Asn262 carries an N-linked (GlcNAc...) asparagine glycan. 3 cysteine pairs are disulfide-bonded: Cys326/Cys392, Cys355/Cys425, and Cys359/Cys427. The interval Ser401 to Tyr415 is interaction with ENG.

Belongs to the TGF-beta family. As to quaternary structure, homodimer; disulfide-linked. Detected in extracellular fluid as mature homodimer, and in complex with its propeptide. Interacts with ACVRL1, BMPR2 and ACVR2B with high affinity (in vitro). Identified in a complex with ACVRL1 and ACVR2B. Has ten times lower affinity for ACVR2A (in vitro). Interacts with ENG, forming a heterotetramer with a 2:2 stoichiometry. Can form a heteromeric complex with ENG and ACVRL1. Interacts with type I receptor ACVR1. Post-translationally, a reversible disulfide bond can be formed between the two subunits in the homodimer; this has no effect on GDF2 activity.

Its subcellular location is the secreted. Functionally, potent circulating inhibitor of angiogenesis. Signals through the type I activin receptor ACVRL1 but not other Alks. Signaling through SMAD1 in endothelial cells requires TGF-beta coreceptor endoglin/ENG. The protein is Growth/differentiation factor 2 (Gdf2) of Mus musculus (Mouse).